The chain runs to 100 residues: Large ribosomal subunit protein uL23 (100 aa).

Belongs to the universal ribosomal protein uL23 family. In terms of assembly, part of the 50S ribosomal subunit. Contacts protein L29, and trigger factor when it is bound to the ribosome.

One of the early assembly proteins it binds 23S rRNA. One of the proteins that surrounds the polypeptide exit tunnel on the outside of the ribosome. Forms the main docking site for trigger factor binding to the ribosome. This is Large ribosomal subunit protein uL23 from Pasteurella multocida (strain Pm70).